An 813-amino-acid polypeptide reads, in one-letter code: Disintegrin and metalloproteinase domain-containing protein 33 (813 aa).

A signal peptide spans 1-29; the sequence is MGWRPRRARGTPLLLLLLLLLLWPVPGAG. Residues 30–203 constitute a propeptide that is removed on maturation; it reads VLQGHIPGQP…PGGPQSRGRR (174 aa). Residues 30–701 are Extracellular-facing; the sequence is VLQGHIPGQP…GPVQAENHDT (672 aa). N-linked (GlcNAc...) asparagine glycosylation is present at N109. The Cysteine switch signature appears at 131–138; that stretch reads CTCSGMSG. Zn(2+) is bound at residue C133. A glycan (N-linked (GlcNAc...) asparagine) is linked at N145. The segment at 184–205 is disordered; the sequence is PGNKAGMTSLPGGPQSRGRREA. The Peptidase M12B domain occupies 210–409; it reads KYLELYIVAD…GGGACLSNAP (200 aa). 2 N-linked (GlcNAc...) asparagine glycosylation sites follow: N231 and N276. Cystine bridges form between C320–C404, C360–C388, and C361–C371. Position 345 (H345) interacts with Zn(2+). Residue E346 is part of the active site. H349 and H355 together coordinate Zn(2+). The 87-residue stretch at 417–503 folds into the Disintegrin domain; that stretch reads PALCGNGFVE…HCPPDVYLLD (87 aa). The N-linked (GlcNAc...) asparagine glycan is linked to N448. 4 disulfide bridges follow: C475-C495, C653-C663, C657-C669, and C671-C680. The EGF-like domain occupies 649–681; sequence ELQRCLTACHSHGVCNSNHNCHCAPGWAPPFCD. Residues 702-722 traverse the membrane as a helical segment; the sequence is FLLAMLLSVLLPLLPGAGLAW. The Cytoplasmic segment spans residues 723–813; the sequence is CCYRLPGAHL…QVQMPRSCLW (91 aa). The segment at 746–813 is disordered; it reads SGPKDGPHRD…QVQMPRSCLW (68 aa). The span at 780–791 shows a compositional bias: basic and acidic residues; sequence ENSHEPSSHPEK.

Requires Zn(2+) as cofactor. In terms of processing, the precursor is cleaved by a furin endopeptidase. In terms of tissue distribution, expressed in all tissues, except liver, with high expression in placenta, lung, spleen and veins.

Its subcellular location is the membrane. In Homo sapiens (Human), this protein is Disintegrin and metalloproteinase domain-containing protein 33 (ADAM33).